The chain runs to 377 residues: Compound eye opsin BCRH2 (377 aa).

The Extracellular portion of the chain corresponds to methionine 1–tryptophan 53. Asparagine 3 carries an N-linked (GlcNAc...) asparagine glycan. Residues histidine 54–leucine 78 traverse the membrane as a helical segment. Residues phenylalanine 79 to asparagine 90 are Cytoplasmic-facing. The helical transmembrane segment at isoleucine 91–cysteine 115 threads the bilayer. Residues phenylalanine 116–tyrosine 131 lie on the Extracellular side of the membrane. A disulfide bridge links cysteine 128 with cysteine 205. The helical transmembrane segment at alanine 132–phenylalanine 151 threads the bilayer. Over aspartate 152–lysine 170 the chain is Cytoplasmic. The chain crosses the membrane as a helical span at residues alanine 171–glycine 194. Topologically, residues asparagine 195 to serine 218 are extracellular. A helical membrane pass occupies residues tyrosine 219–isoleucine 246. The Cytoplasmic segment spans residues phenylalanine 247–lysine 281. The chain crosses the membrane as a helical span at residues threonine 282–valine 305. The Extracellular segment spans residues methionine 306–threonine 313. The helical transmembrane segment at proline 314–serine 338 threads the bilayer. The residue at position 325 (lysine 325) is an N6-(retinylidene)lysine. Residues histidine 339 to alanine 377 are Cytoplasmic-facing.

The protein belongs to the G-protein coupled receptor 1 family. Opsin subfamily. In terms of processing, phosphorylated on some or all of the serine and threonine residues present in the C-terminal region. In terms of tissue distribution, expressed in all of the seven retinular cells (R1-R7) forming the main rhabdom in each ommatidium.

Its subcellular location is the membrane. Functionally, visual pigments are the light-absorbing molecules that mediate vision. They consist of an apoprotein, opsin, covalently linked to cis-retinal. This opsin produces visual pigments with maximal absorption in the blue-green region of the spectrum. In Hemigrapsus sanguineus (Asian shore crab), this protein is Compound eye opsin BCRH2.